A 183-amino-acid polypeptide reads, in one-letter code: Holliday junction branch migration complex subunit RuvA (183 aa).

A domain I region spans residues 1 to 63 (MIVGLIGVVE…EDAHLLYGFL (63 aa)). The segment at 64–139 (EESEKILFER…FFIQDENRPA (76 aa)) is domain II. A139 is a region of interest (flexible linker). The segment at 139-183 (ARNEVFLALESLGFKSAEINPVLKTLKPHLSIEAAIKEALQQLRS) is domain III.

It belongs to the RuvA family. In terms of assembly, homotetramer. Forms an RuvA(8)-RuvB(12)-Holliday junction (HJ) complex. HJ DNA is sandwiched between 2 RuvA tetramers; dsDNA enters through RuvA and exits via RuvB. An RuvB hexamer assembles on each DNA strand where it exits the tetramer. Each RuvB hexamer is contacted by two RuvA subunits (via domain III) on 2 adjacent RuvB subunits; this complex drives branch migration. In the full resolvosome a probable DNA-RuvA(4)-RuvB(12)-RuvC(2) complex forms which resolves the HJ.

It localises to the cytoplasm. Functionally, the RuvA-RuvB-RuvC complex processes Holliday junction (HJ) DNA during genetic recombination and DNA repair, while the RuvA-RuvB complex plays an important role in the rescue of blocked DNA replication forks via replication fork reversal (RFR). RuvA specifically binds to HJ cruciform DNA, conferring on it an open structure. The RuvB hexamer acts as an ATP-dependent pump, pulling dsDNA into and through the RuvAB complex. HJ branch migration allows RuvC to scan DNA until it finds its consensus sequence, where it cleaves and resolves the cruciform DNA. This is Holliday junction branch migration complex subunit RuvA from Helicobacter pylori (strain J99 / ATCC 700824) (Campylobacter pylori J99).